The sequence spans 180 residues: Ribosome maturation factor RimM (180 aa).

The region spanning 97–176 is the PRC barrel domain; the sequence is EGEFFYCDLI…KITTNNAKTL (80 aa).

It belongs to the RimM family. In terms of assembly, binds ribosomal protein uS19.

The protein resides in the cytoplasm. In terms of biological role, an accessory protein needed during the final step in the assembly of 30S ribosomal subunit, possibly for assembly of the head region. Essential for efficient processing of 16S rRNA. May be needed both before and after RbfA during the maturation of 16S rRNA. It has affinity for free ribosomal 30S subunits but not for 70S ribosomes. This is Ribosome maturation factor RimM from Helicobacter acinonychis (strain Sheeba).